The chain runs to 157 residues: Lectin (157 aa).

A disulfide bond links Cys37 and Cys54.

As to quaternary structure, homodimer. Detected in fruits (at protein level).

The protein localises to the secreted. Functionally, binds with high affinity specifically to chito-oligosaccharides. May play a role in plant defense against pathogens by directly binding with the chitin cell wall. Forms filamentous structures at higher concentrations and may promote wound healing by forming filaments with phloem proteins like PP1. The sequence is that of Lectin from Coccinia grandis (Ivy gourd).